The sequence spans 142 residues: HTH-type transcriptional regulator MntR (142 aa).

In terms of domain architecture, HTH dtxR-type spans 1–63; it reads MPTPSMEDYI…YEKYRGLVLT (63 aa). Mn(2+) contacts are provided by aspartate 8, glutamate 11, histidine 77, glutamate 99, glutamate 102, and histidine 103.

Belongs to the DtxR/MntR family. Homodimer.

It localises to the cytoplasm. Its activity is regulated as follows. DNA binding is strongly activated by Mn(2+). Central regulator of manganese homeostasis. This Bacillus cereus (strain B4264) protein is HTH-type transcriptional regulator MntR.